A 927-amino-acid chain; its full sequence is UPF0182 protein bll7333 (927 aa).

Transmembrane regions (helical) follow at residues 17–37 (AVVG…LLAL), 65–85 (AVVF…NGWL), 134–154 (LALL…QFVY), 185–205 (WMML…LVHG), 220–240 (VIAH…WSFG), 264–284 (VGLP…LAAW), and 297–317 (AAFL…PVLF).

The protein belongs to the UPF0182 family.

The protein resides in the cell membrane. The polypeptide is UPF0182 protein bll7333 (Bradyrhizobium diazoefficiens (strain JCM 10833 / BCRC 13528 / IAM 13628 / NBRC 14792 / USDA 110)).